We begin with the raw amino-acid sequence, 330 residues long: MVKIFYDKDVTFDAVKDKTIAVIGYGSQGRAQALNMKDSGLNVIVGLRPNGASWNKAIKDGHKVMTIEEAAEKADIIHILIPDEVQPAVYKKQIEPYLTEGKTISFSHGYNIHYGFIRPPENVNITMVAPKSPGAMVRKTYEEGFGVPGLVAVERDYTGDALQIALGMAKGIGLTKVGVIQTTFREETETDLFGEQVVLCGGVTELIKAAFETLVEAGYAPEMAYFETCHELKLIVDLIYQKGLQGMWENVSNTAEYGGLTRRARVINEESRKAMKEILKEIQDGRFAKEWSLEREAGFPHLNALRRLEKEHLIEKVGKELRKMCGLEKE.

The region spanning 2–182 is the KARI N-terminal Rossmann domain; it reads VKIFYDKDVT…GLTKVGVIQT (181 aa). NADP(+) contacts are provided by residues 25–28, arginine 48, serine 53, and 83–86; these read YGSQ and DEVQ. Residue histidine 108 is part of the active site. Glycine 134 contributes to the NADP(+) binding site. One can recognise a KARI C-terminal knotted domain in the interval 183–328; the sequence is TFREETETDL…KELRKMCGLE (146 aa). The Mg(2+) site is built by aspartate 191, glutamate 195, glutamate 227, and glutamate 231. Serine 252 is a substrate binding site.

The protein belongs to the ketol-acid reductoisomerase family. Mg(2+) serves as cofactor.

It catalyses the reaction (2R)-2,3-dihydroxy-3-methylbutanoate + NADP(+) = (2S)-2-acetolactate + NADPH + H(+). It carries out the reaction (2R,3R)-2,3-dihydroxy-3-methylpentanoate + NADP(+) = (S)-2-ethyl-2-hydroxy-3-oxobutanoate + NADPH + H(+). The protein operates within amino-acid biosynthesis; L-isoleucine biosynthesis; L-isoleucine from 2-oxobutanoate: step 2/4. It participates in amino-acid biosynthesis; L-valine biosynthesis; L-valine from pyruvate: step 2/4. In terms of biological role, involved in the biosynthesis of branched-chain amino acids (BCAA). Catalyzes an alkyl-migration followed by a ketol-acid reduction of (S)-2-acetolactate (S2AL) to yield (R)-2,3-dihydroxy-isovalerate. In the isomerase reaction, S2AL is rearranged via a Mg-dependent methyl migration to produce 3-hydroxy-3-methyl-2-ketobutyrate (HMKB). In the reductase reaction, this 2-ketoacid undergoes a metal-dependent reduction by NADPH to yield (R)-2,3-dihydroxy-isovalerate. The polypeptide is Ketol-acid reductoisomerase (NADP(+)) (Methanocaldococcus jannaschii (strain ATCC 43067 / DSM 2661 / JAL-1 / JCM 10045 / NBRC 100440) (Methanococcus jannaschii)).